Reading from the N-terminus, the 479-residue chain is ATP-dependent RNA helicase DDX19B (479 aa).

Position 2 is an N-acetylalanine (alanine 2). The N-terminal lobe stretch occupies residues 2–300 (ATDSWALAVD…DPNVIKLKRE (299 aa)). The interval 34-54 (TNGAVVKTNANAEKTDEEEKE) is disordered. An N-terminal helix region spans residues 55–68 (DRAAQSLLNKLIRS). Residues 92 to 120 (KSFEELRLKPQLLQGVYAMGFNRPSKIQE) carry the Q motif motif. Residues glutamine 119 and 138 to 145 (SQSGTGKT) each bind ATP. The region spanning 125–295 (LMLAEPPQNL…QKVVPDPNVI (171 aa)) is the Helicase ATP-binding domain. A DEAD box motif is present at residues 242–245 (DEAD). Residues 301–479 (EETLDTIKQY…DLDEIEKIAN (179 aa)) form a C-terminal lobe region. The 169-residue stretch at 306 to 474 (TIKQYYVLCS…RLDTDDLDEI (169 aa)) folds into the Helicase C-terminal domain. 2 residues coordinate ATP: arginine 429 and arginine 432.

The protein belongs to the DEAD box helicase family. DDX19/DBP5 subfamily. As to quaternary structure, associates with the nuclear pore complex via interaction with NUP214. Interacts with NUP214 or RNA in a mutually exclusive manner.

It localises to the cytoplasm. The protein resides in the nucleus. Its subcellular location is the nucleoplasm. It catalyses the reaction ATP + H2O = ADP + phosphate + H(+). In terms of biological role, ATP-dependent RNA helicase involved in mRNA export from the nucleus. Rather than unwinding RNA duplexes, DDX19B functions as a remodeler of ribonucleoprotein particles, whereby proteins bound to nuclear mRNA are dissociated and replaced by cytoplasmic mRNA binding proteins. In Homo sapiens (Human), this protein is ATP-dependent RNA helicase DDX19B (DDX19B).